The sequence spans 329 residues: Carbohydrate sulfotransferase chst-1 (329 aa).

The Cytoplasmic segment spans residues methionine 1–lysine 3. The helical; Signal-anchor for type II membrane protein transmembrane segment at tryptophan 4–phenylalanine 23 threads the bilayer. The Lumenal portion of the chain corresponds to threonine 24–serine 329. Residues lysine 91–leucine 97 and arginine 157–serine 165 contribute to the 3'-phosphoadenylyl sulfate site.

Belongs to the sulfotransferase 2 family. In terms of tissue distribution, highly expressed in the head and tail of hermaphrodites, in particular in amphid and phasmid sheath cells.

It is found in the golgi apparatus membrane. The catalysed reaction is chondroitin beta-D-glucuronate + n 3'-phosphoadenylyl sulfate = chondroitin 4'-sulfate + n adenosine 3',5'-bisphosphate + n H(+). Its function is as follows. Catalyzes the transfer of sulfate to position 4 of non-reducing N-acetylgalactosamine (GalNAc) residue of chondroitin. This is Carbohydrate sulfotransferase chst-1 from Caenorhabditis elegans.